We begin with the raw amino-acid sequence, 319 residues long: ADTYAATRYPVILVHGLAGTDKFANVVDYWYGIQSDLQSHGAKVYVANLSGFQSDDGPNGRGEQLLAYVKQVLAATGATKVNLIGHSQGGLTSRYVAAVAPQLVASVTTIGTPHRGSEFADFVQDVLKTDPTGLSSTVIAAFVNVFGTLVSSSHNTDQDALAALRTLTTAQTATYNRNFPSAGLGAPGSCQTGAATETVGGSQHLLYSWGGTAIQPTSTVLGVTGATDTSTGTLDVANVTDPSTLALLATGAVMINRASGQNDGLVSRCSSLFGQVISTSYHWNHLDEINQLLGVRGANAEDPVAVIRTHVNRLKLQGV.

The AB hydrolase-1 domain maps to Pro10–Glu288. Leu17 contacts substrate. Ser87 acts as the Nucleophile in catalysis. A substrate-binding site is contributed by Gln88. Cysteines 190 and 269 form a disulfide. A Ca(2+)-binding site is contributed by Asp241. Catalysis depends on charge relay system residues Asp263 and His285. Ca(2+) is bound by residues Asp287, Gln291, and Val295.

It belongs to the AB hydrolase superfamily. Pseudomonas lipase family. In terms of assembly, monomer. Interacts with lipase-specific foldase Lif. The cofactor is Ca(2+).

Its subcellular location is the secreted. It catalyses the reaction a triacylglycerol + H2O = a diacylglycerol + a fatty acid + H(+). Its function is as follows. Catalyzes the hydrolysis of triacylglycerol. The sequence is that of Triacylglycerol lipase from Pseudarthrobacter phenanthrenivorans (Arthrobacter phenanthrenivorans).